We begin with the raw amino-acid sequence, 1468 residues long: DNA-directed RNA polymerase subunit beta (1468 aa).

This sequence belongs to the RNA polymerase beta chain family. As to quaternary structure, the RNAP catalytic core consists of 2 alpha, 1 beta, 1 beta' and 1 omega subunit. When a sigma factor is associated with the core the holoenzyme is formed, which can initiate transcription.

The catalysed reaction is RNA(n) + a ribonucleoside 5'-triphosphate = RNA(n+1) + diphosphate. Functionally, DNA-dependent RNA polymerase catalyzes the transcription of DNA into RNA using the four ribonucleoside triphosphates as substrates. This Aquifex aeolicus (strain VF5) protein is DNA-directed RNA polymerase subunit beta.